Consider the following 517-residue polypeptide: Probable bifunctional methylthioribulose-1-phosphate dehydratase/enolase-phosphatase E1 (517 aa).

The methylthioribulose-1-phosphate dehydratase stretch occupies residues 1–242 (MACGGCSCEA…CIKLYQLGID (242 aa)). Cys114 contacts substrate. His132 and His134 together coordinate Zn(2+). Glu157 functions as the Proton donor/acceptor; for methylthioribulose-1-phosphate dehydratase activity in the catalytic mechanism. His207 is a binding site for Zn(2+). The interval 278 to 517 (VVLDIEGTTT…FRTIKSFSEI (240 aa)) is enolase-phosphatase E1. Residues Asp281 and Glu283 each coordinate Mg(2+). Substrate-binding positions include 416–417 (SS) and Lys450. Asp476 lines the Mg(2+) pocket.

This sequence in the N-terminal section; belongs to the aldolase class II family. MtnB subfamily. It in the C-terminal section; belongs to the HAD-like hydrolase superfamily. MasA/MtnC family. Zn(2+) is required as a cofactor. Mg(2+) serves as cofactor.

It carries out the reaction 5-(methylsulfanyl)-D-ribulose 1-phosphate = 5-methylsulfanyl-2,3-dioxopentyl phosphate + H2O. It catalyses the reaction 5-methylsulfanyl-2,3-dioxopentyl phosphate + H2O = 1,2-dihydroxy-5-(methylsulfanyl)pent-1-en-3-one + phosphate. Its pathway is amino-acid biosynthesis; L-methionine biosynthesis via salvage pathway; L-methionine from S-methyl-5-thio-alpha-D-ribose 1-phosphate: step 2/6. It functions in the pathway amino-acid biosynthesis; L-methionine biosynthesis via salvage pathway; L-methionine from S-methyl-5-thio-alpha-D-ribose 1-phosphate: step 3/6. The protein operates within amino-acid biosynthesis; L-methionine biosynthesis via salvage pathway; L-methionine from S-methyl-5-thio-alpha-D-ribose 1-phosphate: step 4/6. This chain is Probable bifunctional methylthioribulose-1-phosphate dehydratase/enolase-phosphatase E1, found in Sorghum bicolor (Sorghum).